Consider the following 74-residue polypeptide: Sec-independent protein translocase protein TatA (74 aa).

Residues 1–21 (MGSIGMTELLLIFGIIVLLFG) form a helical membrane-spanning segment.

The protein belongs to the TatA/E family. Forms a complex with TatC.

The protein resides in the cell inner membrane. Part of the twin-arginine translocation (Tat) system that transports large folded proteins containing a characteristic twin-arginine motif in their signal peptide across membranes. TatA could form the protein-conducting channel of the Tat system. The sequence is that of Sec-independent protein translocase protein TatA from Sulfurihydrogenibium sp. (strain YO3AOP1).